The sequence spans 356 residues: Heat-inducible transcription repressor HrcA (356 aa).

This sequence belongs to the HrcA family.

In terms of biological role, negative regulator of class I heat shock genes (grpE-dnaK-dnaJ and groELS operons). Prevents heat-shock induction of these operons. This chain is Heat-inducible transcription repressor HrcA, found in Chelativorans sp. (strain BNC1).